Reading from the N-terminus, the 535-residue chain is Bifunctional purine biosynthesis protein PurH (535 aa).

The region spanning 6–151 (TRLPIRRALI…KNHKDVAIVV (146 aa)) is the MGS-like domain.

Belongs to the PurH family.

The enzyme catalyses (6R)-10-formyltetrahydrofolate + 5-amino-1-(5-phospho-beta-D-ribosyl)imidazole-4-carboxamide = 5-formamido-1-(5-phospho-D-ribosyl)imidazole-4-carboxamide + (6S)-5,6,7,8-tetrahydrofolate. The catalysed reaction is IMP + H2O = 5-formamido-1-(5-phospho-D-ribosyl)imidazole-4-carboxamide. It participates in purine metabolism; IMP biosynthesis via de novo pathway; 5-formamido-1-(5-phospho-D-ribosyl)imidazole-4-carboxamide from 5-amino-1-(5-phospho-D-ribosyl)imidazole-4-carboxamide (10-formyl THF route): step 1/1. Its pathway is purine metabolism; IMP biosynthesis via de novo pathway; IMP from 5-formamido-1-(5-phospho-D-ribosyl)imidazole-4-carboxamide: step 1/1. In Pseudomonas fluorescens (strain ATCC BAA-477 / NRRL B-23932 / Pf-5), this protein is Bifunctional purine biosynthesis protein PurH.